The sequence spans 72 residues: Translation initiation factor IF-1 (72 aa).

In terms of domain architecture, S1-like spans 1 to 72; sequence MSKEGKITLK…TRGRIIYRIS (72 aa).

Belongs to the IF-1 family. Component of the 30S ribosomal translation pre-initiation complex which assembles on the 30S ribosome in the order IF-2 and IF-3, IF-1 and N-formylmethionyl-tRNA(fMet); mRNA recruitment can occur at any time during PIC assembly.

It is found in the cytoplasm. Its function is as follows. One of the essential components for the initiation of protein synthesis. Stabilizes the binding of IF-2 and IF-3 on the 30S subunit to which N-formylmethionyl-tRNA(fMet) subsequently binds. Helps modulate mRNA selection, yielding the 30S pre-initiation complex (PIC). Upon addition of the 50S ribosomal subunit IF-1, IF-2 and IF-3 are released leaving the mature 70S translation initiation complex. In Malacoplasma penetrans (strain HF-2) (Mycoplasma penetrans), this protein is Translation initiation factor IF-1.